Consider the following 328-residue polypeptide: DNA-directed RNA polymerase subunit alpha 1 (328 aa).

Residues 1–234 (MQGFVKDFLK…GQLDEFVDER (234 aa)) form an alpha N-terminal domain (alpha-NTD) region. An alpha C-terminal domain (alpha-CTD) region spans residues 248–328 (FDPILLRPVN…NWPPASLIED (81 aa)).

It belongs to the RNA polymerase alpha chain family. Homodimer. The RNAP catalytic core consists of 2 alpha, 1 beta, 1 beta' and 1 omega subunit. When a sigma factor is associated with the core the holoenzyme is formed, which can initiate transcription.

It carries out the reaction RNA(n) + a ribonucleoside 5'-triphosphate = RNA(n+1) + diphosphate. Its function is as follows. DNA-dependent RNA polymerase catalyzes the transcription of DNA into RNA using the four ribonucleoside triphosphates as substrates. The protein is DNA-directed RNA polymerase subunit alpha 1 of Psychromonas ingrahamii (strain DSM 17664 / CCUG 51855 / 37).